A 427-amino-acid chain; its full sequence is MLDINYIRQSPEEVAGMLKKRRQEEDCATLDELLEYDRQRRELVQETDALKALRNKVSKDIAVIKRTGQGSAEDLIREMKEVADRIAGMDETLGEIEKQMESILLSLPNKLHPDVPEGYSAEENHICKDPVAFDHALDFPLMDHLDLGNKLGILDFERGAKISGTGFPVYIGKGARLERALLNFMLDCHTENHGYTEVFPPFMVNEDSLRGTGQWPKFADQVYYMNEDNLYAIPTAEVPVTNLHRNEMLKDEELPISYAAYSACFRREAGSYGKDTRGFLRVHQFNKIEMVKFTRPEESYDALEKILQNAEAILNALRIPYRVLLLCSGDISAGATKCYDIEVWSPAEKKYLEASSCSNFEDYQARRANIRFKPAGSSKPTYVHTLNGSGLATSRLMVSLLENYQTAEGTIVVPEVLRKYTGFDLID.

L-serine is bound at residue 235 to 237 (TAE). ATP is bound by residues 266–268 (RRE) and V282. Position 289 (E289) interacts with L-serine. Position 353-356 (353-356 (EASS)) interacts with ATP. An L-serine-binding site is contributed by S389.

It belongs to the class-II aminoacyl-tRNA synthetase family. Type-1 seryl-tRNA synthetase subfamily. Homodimer. The tRNA molecule binds across the dimer.

The protein resides in the cytoplasm. It catalyses the reaction tRNA(Ser) + L-serine + ATP = L-seryl-tRNA(Ser) + AMP + diphosphate + H(+). The catalysed reaction is tRNA(Sec) + L-serine + ATP = L-seryl-tRNA(Sec) + AMP + diphosphate + H(+). It participates in aminoacyl-tRNA biosynthesis; selenocysteinyl-tRNA(Sec) biosynthesis; L-seryl-tRNA(Sec) from L-serine and tRNA(Sec): step 1/1. Its function is as follows. Catalyzes the attachment of serine to tRNA(Ser). Is also able to aminoacylate tRNA(Sec) with serine, to form the misacylated tRNA L-seryl-tRNA(Sec), which will be further converted into selenocysteinyl-tRNA(Sec). This chain is Serine--tRNA ligase, found in Chlorobium phaeobacteroides (strain BS1).